The chain runs to 142 residues: Large ribosomal subunit protein bL17 (142 aa).

It belongs to the bacterial ribosomal protein bL17 family. As to quaternary structure, part of the 50S ribosomal subunit. Contacts protein L32.

In Chlamydia pneumoniae (Chlamydophila pneumoniae), this protein is Large ribosomal subunit protein bL17.